The following is a 207-amino-acid chain: 23 kDa calcium-binding protein (207 aa).

At M1 the chain carries Blocked amino end (Met). EF-hand domains lie at 17–52 (AKLDVARKLFAQFDSNKNGTLDPSEVAGLIKTTFEN), 60–95 (VTADDVKLYMKSVDVDNNGLVSYSEYEEYVIACLKK), 119–154 (MKLDVARRLFAKYDSDKSGQLEEKEVYGVITETYKQ), and 161–196 (PTEADVKLWMSMTDTDKNGTVSIVEYEDFVISGLKK). Residues D30, N32, N34, T36, E41, D73, D75, N77, E84, D132, D134, S136, Q138, E143, D174, D176, N178, T180, and E185 each contribute to the Ca(2+) site.

Its function is as follows. Expected to play a crucial role in calcium-dependent regulation of ciliary movement. This Tetrahymena thermophila protein is 23 kDa calcium-binding protein.